The chain runs to 553 residues: Transcriptional regulator HilA (553 aa).

The ompR/PhoB-type DNA-binding region spans 11–107 (NKKFVFDDFI…LYGQGYRFNR (97 aa)). Aspartate 62 carries the 4-aspartylphosphate modification. A TPR repeat occupies 372–405 (ADIKYYYGWNLFMAGQLEEALQTINECLKLDPTR).

Its function is as follows. The main transcriptional regulator of the Salmonella pathogenicity island 1 (SPI1) gene expression. Activates the expression of invasion genes by a direct action at their promoters and also indirectly by increasing the level of invF. Also binds upstream of prgH and directly activates the expression of prgHIJK operon. The polypeptide is Transcriptional regulator HilA (hilA) (Salmonella paratyphi A (strain ATCC 9150 / SARB42)).